Here is a 594-residue protein sequence, read N- to C-terminus: Insulin-like growth factor 2 mRNA-binding protein 3-A (594 aa).

RRM domains lie at 2–75 (NKLY…HSVP) and 81–156 (RKLQ…YIPD). Residues 161–177 (PQAPSQQLQQQPQQQHP) show a composition bias toward low complexity. The interval 161–206 (PQAPSQQLQQQPQQQHPQGRRGFGQRGPARQGSPGAAARPKPQTEV) is disordered. KH domains lie at 205 to 270 (EVPL…CKII) and 286 to 353 (EIPL…EEEI). Residues 392 to 415 (GMPPPSVGVPSPTSSTSYPPFGQQ) are disordered. The segment covering 399 to 411 (GVPSPTSSTSYPP) has biased composition (low complexity). KH domains lie at 418 to 483 (SETV…QGRI) and 500 to 566 (KLET…QRKI).

It belongs to the RRM IMP/VICKZ family. As to quaternary structure, homodimer and multimer. Associates with microtubules. Interaction with a translocation machinery protein TRAPA of the endoplasmic reticulum. Component of a mRNP complex, at least composed of DAZAP1, IGF2BP3, STAU and VgRBP60. The mRNP complex with DAZAP1, IGF2BP3, STAU and VgRBP60 is only found in the cytoplasm. Interacts with a hnRNP 1 related RNA transport protein VgRBP60 both in the nucleus (in a RNA-independent manner) and the cytoplasm (in a RNA-dependent manner). Found in a B3 activator complex.

Its subcellular location is the nucleus. It localises to the cytoplasm. The protein resides in the endoplasmic reticulum. Its function is as follows. RNA-binding protein that acts as a regulator of mRNA transport and localization. Binds to the RNA sequence motif 5'-UUCAC-3'. Preferentially binds to N6-methyladenosine (m6A)-containing mRNAs and increases their stability. Mediates the specific association of Vg1 RNA to microtubules. Binds specifically to the vegetal localization elements (VLE or VgLE) in the 3'-UTR of Vg1 and VegT mRNAs. Binds to the Vg1 and VegT mRNAs in both the nucleus and the cytoplasm. May regulate mRNA translation. Acts as a transcription regulator. Binds to the 5'-[TA]GGTTACT-3' motif within element 3 of the TFIIIA gene promoter. This Xenopus laevis (African clawed frog) protein is Insulin-like growth factor 2 mRNA-binding protein 3-A (igf2bp3-a).